Here is a 121-residue protein sequence, read N- to C-terminus: ATP synthase epsilon chain (121 aa).

The protein belongs to the ATPase epsilon chain family. As to quaternary structure, F-type ATPases have 2 components, CF(1) - the catalytic core - and CF(0) - the membrane proton channel. CF(1) has five subunits: alpha(3), beta(3), gamma(1), delta(1), epsilon(1). CF(0) has three main subunits: a, b and c.

The protein localises to the cell membrane. Produces ATP from ADP in the presence of a proton gradient across the membrane. The sequence is that of ATP synthase epsilon chain from Mycolicibacterium smegmatis (strain ATCC 700084 / mc(2)155) (Mycobacterium smegmatis).